Here is a 173-residue protein sequence, read N- to C-terminus: Crossover junction endodeoxyribonuclease RuvC (173 aa).

Residues aspartate 8, glutamate 67, and aspartate 139 contribute to the active site. Mg(2+) contacts are provided by aspartate 8, glutamate 67, and aspartate 139.

It belongs to the RuvC family. Homodimer which binds Holliday junction (HJ) DNA. The HJ becomes 2-fold symmetrical on binding to RuvC with unstacked arms; it has a different conformation from HJ DNA in complex with RuvA. In the full resolvosome a probable DNA-RuvA(4)-RuvB(12)-RuvC(2) complex forms which resolves the HJ. The cofactor is Mg(2+).

The protein resides in the cytoplasm. It carries out the reaction Endonucleolytic cleavage at a junction such as a reciprocal single-stranded crossover between two homologous DNA duplexes (Holliday junction).. Functionally, the RuvA-RuvB-RuvC complex processes Holliday junction (HJ) DNA during genetic recombination and DNA repair. Endonuclease that resolves HJ intermediates. Cleaves cruciform DNA by making single-stranded nicks across the HJ at symmetrical positions within the homologous arms, yielding a 5'-phosphate and a 3'-hydroxyl group; requires a central core of homology in the junction. The consensus cleavage sequence is 5'-(A/T)TT(C/G)-3'. Cleavage occurs on the 3'-side of the TT dinucleotide at the point of strand exchange. HJ branch migration catalyzed by RuvA-RuvB allows RuvC to scan DNA until it finds its consensus sequence, where it cleaves and resolves the cruciform DNA. The protein is Crossover junction endodeoxyribonuclease RuvC of Vibrio vulnificus (strain CMCP6).